A 308-amino-acid polypeptide reads, in one-letter code: Glutaminase (308 aa).

Residues Ser-66, Asn-117, Glu-161, Asn-168, Tyr-192, Tyr-244, and Val-262 each contribute to the substrate site.

It belongs to the glutaminase family. As to quaternary structure, homotetramer.

The catalysed reaction is L-glutamine + H2O = L-glutamate + NH4(+). This Salmonella agona (strain SL483) protein is Glutaminase.